The following is a 684-amino-acid chain: MSAQDFLVELGTEELPPKALNTLADAFLAGIEKGLHSAGLKFEAKKVYAAPRRLAVLLTALETQQPDRSINLDGPPRQAAFDAEGNPTQAALGFAKKCGVELSEIDQSGPKLRFSQVITGKPTASLLPTIVEDSLNDLPIPKRMRWGARKEEFVRPTQWLVMLLGDQVIDCTLLAQKAGRDSRGHRFHHPQAVRITSPANYAADLRAAYVLADANERRELISKRTEELARLQEGTAIVPPSLLDEVTALVEWPVPLVCSFEERFLDVPQEALITTMQDNQKYFCLLDVDGKLLPRFITVANIESKDPQQIIAGNEKVVRPRLTDAEFFFKQDKKQKLEDFNLRLQNVVFQEKLGSVYDKAVRVSKLAAYIAQRIGGDAAWAARAGLLSKCDLATEMVGEFPEMQGVAGYYYALNDGEPDDVALALNEQYMPRGAGAELPTTLTGAAVAIADKLDTLVGIFGIGMLPTGSKDPYALRRAALGVLRILIDKKLDLDLTQAVVFAVGQFGAKVKQAGLAEQVLEFVFDRLRARYEDEGVDVSVYLSVRALQPGSALDFDQRVQAVQAFRKLPEADALASVNKRVSNLLSKAEGLGNADVDPGLFADAKEFSLNSAIAKAENAVKPLIAERNYAEALARLATLREPVDAFFEAVMINAEDAGVRKNRYAMLARLRGLFVNIADISTLS.

This sequence belongs to the class-II aminoacyl-tRNA synthetase family. Tetramer of two alpha and two beta subunits.

The protein localises to the cytoplasm. The enzyme catalyses tRNA(Gly) + glycine + ATP = glycyl-tRNA(Gly) + AMP + diphosphate. The chain is Glycine--tRNA ligase beta subunit from Pseudomonas fluorescens (strain SBW25).